The chain runs to 60 residues: Cytotoxin 7 (60 aa).

4 cysteine pairs are disulfide-bonded: cysteine 3–cysteine 21, cysteine 14–cysteine 38, cysteine 42–cysteine 53, and cysteine 54–cysteine 59.

It belongs to the three-finger toxin family. Short-chain subfamily. Type IA cytotoxin sub-subfamily. As to quaternary structure, monomer in solution; Homodimer and oligomer in the presence of negatively charged lipids forming a pore with a size ranging between 20 and 30 Angstroms. In terms of tissue distribution, expressed by the venom gland.

Its subcellular location is the secreted. The protein resides in the target cell membrane. Its function is as follows. Shows cytolytic activity on many different cells by forming pore in lipid membranes. In vivo, increases heart rate or kills the animal by cardiac arrest. In addition, it binds to heparin with high affinity, interacts with Kv channel-interacting protein 1 (KCNIP1) in a calcium-independent manner, and binds to integrin alpha-V/beta-3 (ITGAV/ITGB3) with moderate affinity. This is Cytotoxin 7 from Naja annulifera (Banded Egyptian cobra).